A 270-amino-acid polypeptide reads, in one-letter code: Thiazole synthase (270 aa).

The active-site Schiff-base intermediate with DXP is K111. Residues G172, 198–199 (AG), and 220–221 (NS) each bind 1-deoxy-D-xylulose 5-phosphate. The interval 249-270 (AGRLPTRAQASPSSPTTGKVND) is disordered. A compositionally biased stretch (polar residues) spans 256–270 (AQASPSSPTTGKVND).

It belongs to the ThiG family. As to quaternary structure, homotetramer. Forms heterodimers with either ThiH or ThiS.

Its subcellular location is the cytoplasm. It catalyses the reaction [ThiS sulfur-carrier protein]-C-terminal-Gly-aminoethanethioate + 2-iminoacetate + 1-deoxy-D-xylulose 5-phosphate = [ThiS sulfur-carrier protein]-C-terminal Gly-Gly + 2-[(2R,5Z)-2-carboxy-4-methylthiazol-5(2H)-ylidene]ethyl phosphate + 2 H2O + H(+). It participates in cofactor biosynthesis; thiamine diphosphate biosynthesis. Its function is as follows. Catalyzes the rearrangement of 1-deoxy-D-xylulose 5-phosphate (DXP) to produce the thiazole phosphate moiety of thiamine. Sulfur is provided by the thiocarboxylate moiety of the carrier protein ThiS. In vitro, sulfur can be provided by H(2)S. This Synechococcus sp. (strain WH7803) protein is Thiazole synthase.